Consider the following 320-residue polypeptide: rRNA 2'-O-methyltransferase fibrillarin 2 (320 aa).

The interval 1–79 (MRPPLTGSGG…GRGGMKGGSK (79 aa)) is disordered. Composition is skewed to gly residues over residues 7–44 (GSGG…GGRG) and 57–76 (PPRG…GMKG). Residues 167–168 (TT), 186–187 (EF), 211–212 (DA), and 231–234 (DVAQ) each bind S-adenosyl-L-methionine.

This sequence belongs to the methyltransferase superfamily. Fibrillarin family. Component of box C/D small nucleolar ribonucleoprotein (snoRNP) particles. Interacts with groundnut rosette virus long-distance movement protein; this interaction is required for virus long-distance movement protein transiting through host Cajal body and nucleolus, relocalization of fibrillarin to the cytoplasm, and in presence of viral RNA, leads to the formation of stable RNPs. Interacts (via GAR domain) with the hordeivirus TGB1 movement protein (via the first 82 amino acid residues). Interacts with PRMT11 and PRMT12. Interacts with MED19A. Post-translationally, methylated by PRMT11 and PRMT12. Expressed in roots and flowers. Expressed in leaves and stems. Expression levels decrease during aging.

Its subcellular location is the nucleus. The protein localises to the nucleolus. It carries out the reaction a ribonucleotide in rRNA + S-adenosyl-L-methionine = a 2'-O-methylribonucleotide in rRNA + S-adenosyl-L-homocysteine + H(+). It catalyses the reaction L-glutaminyl-[histone H2A] + S-adenosyl-L-methionine = N(5)-methyl-L-glutaminyl-[histone H2A] + S-adenosyl-L-homocysteine + H(+). In terms of biological role, S-adenosyl-L-methionine-dependent methyltransferase that has the ability to methylate both RNAs and proteins. Involved in pre-rRNA processing. Utilizes the methyl donor S-adenosyl-L-methionine to catalyze the site-specific 2'-hydroxyl methylation of ribose moieties in pre-ribosomal RNA. Site specificity is provided by a guide RNA that base pairs with the substrate. Methylation occurs at a characteristic distance from the sequence involved in base pairing with the guide RNA. Also acts as a protein methyltransferase by mediating methylation of 'Gln-105' of histone H2A (H2AQ105me), a modification that impairs binding of the FACT complex and is specifically present at 35S ribosomal DNA locus. Acts as a negative regulator of expression of immune responsive genes, including pathogenesis-related gene 1 (PR1), and of resistance against bacterial pathogen. Binds to MED19A, a positive regulator of PR1 expression, to repress the activator activity of MED19A. In response to the bacterial pathogen-associated molecular pattern (PAMP) elf18, associates with the long non-coding RNA (lncRNA) ELENA1 (At4g16355), and releases its repression of MED19A. Possesses ribonuclease activity toward rRNA in vitro. Binds phosphoinositides, phospholipids and phosphatidic acid in vitro. In Arabidopsis thaliana (Mouse-ear cress), this protein is rRNA 2'-O-methyltransferase fibrillarin 2.